The primary structure comprises 274 residues: 2,3,4,5-tetrahydropyridine-2,6-dicarboxylate N-succinyltransferase (274 aa).

Substrate-binding residues include R104 and D141.

The protein belongs to the transferase hexapeptide repeat family. In terms of assembly, homotrimer.

The protein localises to the cytoplasm. It carries out the reaction (S)-2,3,4,5-tetrahydrodipicolinate + succinyl-CoA + H2O = (S)-2-succinylamino-6-oxoheptanedioate + CoA. The protein operates within amino-acid biosynthesis; L-lysine biosynthesis via DAP pathway; LL-2,6-diaminopimelate from (S)-tetrahydrodipicolinate (succinylase route): step 1/3. The polypeptide is 2,3,4,5-tetrahydropyridine-2,6-dicarboxylate N-succinyltransferase (Shewanella baltica (strain OS155 / ATCC BAA-1091)).